The sequence spans 525 residues: G patch domain-containing protein 3 (525 aa).

Residues 264–316 form a disordered region; that stretch reads YLADIPASPCGEPEEEVGKEEEEESHSDEDDDRGEEWERHEALHEDVTGQERT. A compositionally biased stretch (acidic residues) spans 275–298; the sequence is EPEEEVGKEEEEESHSDEDDDRGE. A compositionally biased stretch (basic and acidic residues) spans 299–316; it reads EWERHEALHEDVTGQERT. A G-patch domain is found at 410 to 458; it reads TKGIGRKVMERQGWAEGQGLGCRCSGVPEALDSDGQHPRCKRGLGYHGE.

In terms of assembly, interacts with mitochondrial MAVS; the interaction is markedly increased upon viral infection. Expressed in ocular tissues including retinal pigment epithelium, cornea, ciliary muscle and non-pigmented ciliary epithelium. Also expressed in optic nerve, cartilage, skin and lymph node.

It is found in the nucleus. Its subcellular location is the cytoplasm. In terms of biological role, involved in transcriptional regulation. It is able to activate transcription from the CXCR4 promoter and therefore it might control neural crest cell migration involved in ocular and craniofacial development. Is a negative regulator of immune antiviral response, acting via down-regulation of RIG-I-like receptors signaling and inhibition of type I interferon production. The control mechanism involves interaction with mitochondrial MAVS and inhibition of MAVS assembly with downstream proteins implicated in antiviral response, such as TBK1 and TRAF6. This chain is G patch domain-containing protein 3 (GPATCH3), found in Homo sapiens (Human).